A 238-amino-acid chain; its full sequence is 2-C-methyl-D-erythritol 4-phosphate cytidylyltransferase (238 aa).

This sequence belongs to the IspD/TarI cytidylyltransferase family. IspD subfamily.

It catalyses the reaction 2-C-methyl-D-erythritol 4-phosphate + CTP + H(+) = 4-CDP-2-C-methyl-D-erythritol + diphosphate. Its pathway is isoprenoid biosynthesis; isopentenyl diphosphate biosynthesis via DXP pathway; isopentenyl diphosphate from 1-deoxy-D-xylulose 5-phosphate: step 2/6. In terms of biological role, catalyzes the formation of 4-diphosphocytidyl-2-C-methyl-D-erythritol from CTP and 2-C-methyl-D-erythritol 4-phosphate (MEP). This Acinetobacter baumannii (strain ATCC 17978 / DSM 105126 / CIP 53.77 / LMG 1025 / NCDC KC755 / 5377) protein is 2-C-methyl-D-erythritol 4-phosphate cytidylyltransferase.